Here is an 80-residue protein sequence, read N- to C-terminus: Cytochrome c oxidase subunit 7A1, mitochondrial (80 aa).

A mitochondrion-targeting transit peptide spans 1-21 (MRALRVSQALVRSFSSTARNR). Topologically, residues 22–46 (LENRVAEKQKIFQADNDLPVHLKGG) are mitochondrial matrix. Residues 47 to 75 (ATDNILYRVTMTLCLGGTVYSLYCLGWAS) form a helical membrane-spanning segment. The Mitochondrial intermembrane portion of the chain corresponds to 76-80 (FPHKK).

Belongs to the cytochrome c oxidase VIIa family. Component of the complex IV (CIV, cytochrome c oxidase), a multisubunit enzyme composed of 14 subunits. The complex is composed of a catalytic core of 3 subunits MT-CO1, MT-CO2 and MT-CO3, encoded in the mitochondrial DNA, and 11 supernumerary subunits COX4I1 (or COX4I2), COX5A, COX5B, COX6A2 (or COX6A1), COX6B1 (or COX6B2), COX6C, COX7A1 (or COX7A2), COX7B, COX7C, COX8B and NDUFA4, which are encoded in the nuclear genome. The complex exists as a monomer or a dimer and forms supercomplexes (SCs) in the inner mitochondrial membrane with NADH-ubiquinone oxidoreductase (complex I, CI) and ubiquinol-cytochrome c oxidoreductase (cytochrome b-c1 complex, complex III, CIII), resulting in different assemblies (supercomplex SCI(1)III(2)IV(1) and megacomplex MCI(2)III(2)IV(2)).

Its subcellular location is the mitochondrion inner membrane. It functions in the pathway energy metabolism; oxidative phosphorylation. In terms of biological role, component of the mitochondrial respiratory complex IV (CIV, also named cytochrome c oxidase complex), the last enzyme in the mitochondrial electron transport chain which drives oxidative phosphorylation. The CIV complex is the component of the respiratory chain that catalyzes the reduction of oxygen to water. Acts as an assembly factor that specifically drives the homodimerization of CIV complexes, mediating the formation of mitochondrial respiratory supercomplexes (respirasomes) containing two CIV: supercomplxes with two molecules of CIV show improved activity. Despite being highly expressed in brown adipose tissue, not required for thermogenesis. The chain is Cytochrome c oxidase subunit 7A1, mitochondrial (COX7A1) from Sus scrofa (Pig).